The chain runs to 113 residues: uncharacterized protein (113 aa).

The segment covering 1-19 (MDKKSAHRNPEDAKAGKYE) has biased composition (basic and acidic residues). Residues 1–94 (MDKKSAHRNP…NKWRGKRKVS (94 aa)) form a disordered region. Residues 20 to 41 (GKHKRKKKRKQNQNQHRSRHRS) are compositionally biased toward basic residues. Over residues 52–66 (FPSSSSSSSGSQTDS) the composition is skewed to low complexity. Over residues 75–92 (KIKKKRREKTNKWRGKRK) the composition is skewed to basic residues.

This is an uncharacterized protein from Macaca fascicularis (Crab-eating macaque).